The primary structure comprises 470 residues: L-seryl-tRNA(Sec) selenium transferase (470 aa).

At K294 the chain carries N6-(pyridoxal phosphate)lysine.

It belongs to the SelA family. The cofactor is pyridoxal 5'-phosphate.

It localises to the cytoplasm. The enzyme catalyses L-seryl-tRNA(Sec) + selenophosphate + H(+) = L-selenocysteinyl-tRNA(Sec) + phosphate. It participates in aminoacyl-tRNA biosynthesis; selenocysteinyl-tRNA(Sec) biosynthesis; selenocysteinyl-tRNA(Sec) from L-seryl-tRNA(Sec) (bacterial route): step 1/1. Functionally, converts seryl-tRNA(Sec) to selenocysteinyl-tRNA(Sec) required for selenoprotein biosynthesis. The chain is L-seryl-tRNA(Sec) selenium transferase from Solidesulfovibrio magneticus (strain ATCC 700980 / DSM 13731 / RS-1) (Desulfovibrio magneticus).